A 589-amino-acid chain; its full sequence is Monocopper oxidase-like protein SKS1 (589 aa).

An N-terminal signal peptide occupies residues 1-24; the sequence is MAATCSLLASFLLCFALLSAVSFA. N62, N111, N204, N243, N260, N296, N345, N365, N433, and N447 each carry an N-linked (GlcNAc...) asparagine glycan. Residues 322–356 are disordered; that stretch reads LPVPKTDVSSPWSAMSQPKTIRQNTSASGARPNPQ. The segment covering 328 to 349 has biased composition (polar residues); it reads DVSSPWSAMSQPKTIRQNTSAS. H455 is a Cu cation binding site. S563 carries GPI-anchor amidated serine lipidation. The propeptide at 564–589 is removed in mature form; that stretch reads AATSILNGHLKLMLLMVLLASVFRFC.

Belongs to the multicopper oxidase family. It depends on Cu cation as a cofactor.

The protein resides in the cell membrane. The sequence is that of Monocopper oxidase-like protein SKS1 (SKS1) from Arabidopsis thaliana (Mouse-ear cress).